Consider the following 402-residue polypeptide: Argininosuccinate synthase (402 aa).

8 to 16 is an ATP binding site; it reads AYSGGLDTS. The L-citrulline site is built by Tyr86 and Ser91. Gly116 is an ATP binding site. Residues Thr118, Asn122, and Asp123 each contribute to the L-aspartate site. An L-citrulline-binding site is contributed by Asn122. Residues Arg126, Ser175, Ser184, Glu260, and Tyr272 each coordinate L-citrulline.

The protein belongs to the argininosuccinate synthase family. Type 1 subfamily. Homotetramer.

It localises to the cytoplasm. The catalysed reaction is L-citrulline + L-aspartate + ATP = 2-(N(omega)-L-arginino)succinate + AMP + diphosphate + H(+). The protein operates within amino-acid biosynthesis; L-arginine biosynthesis; L-arginine from L-ornithine and carbamoyl phosphate: step 2/3. This is Argininosuccinate synthase from Clostridium novyi (strain NT).